Consider the following 491-residue polypeptide: Delayed-rectifier potassium channel regulatory subunit KCNS3 (491 aa).

The Cytoplasmic segment spans residues 1 to 182 (MVFGEFFHRP…IRMENPAYCL (182 aa)). Residues 183–204 (SAKLIAISSLSVVLASIVAMCV) form a helical membrane-spanning segment. Topologically, residues 205–220 (HSMSEFQNEDGEVDDP) are extracellular. Residues 221–243 (VLEGVEIACIAWFTGELAIRLVA) traverse the membrane as a helical segment. At 244 to 254 (APSQKKFWKNP) the chain is on the cytoplasmic side. The chain crosses the membrane as a helical span at residues 255 to 275 (LNIIDFVSIIPFYATLAVDTK). The Extracellular portion of the chain corresponds to 276 to 285 (EEESEDIENM). The chain crosses the membrane as a helical; Voltage-sensor span at residues 286 to 306 (GKVVQILRLMRIFRILKLARH). At 307–321 (SVGLRSLGATLRHSY) the chain is on the cytoplasmic side. The chain crosses the membrane as a helical span at residues 322 to 343 (HEVGLLLLFLSVGISIFSVLIY). Residues 344–357 (SVEKDEHKSSLTSI) are Extracellular-facing. The segment at residues 358 to 369 (PICWWWATISMT) is an intramembrane region (helical). The short motif at 370-375 (TVGYGD) is the Selectivity filter element. An intramembrane segment occupies 370 to 377 (TVGYGDTH). Residues 378–384 (PVTLAGK) are Extracellular-facing. The chain crosses the membrane as a helical span at residues 385-413 (IIASTCIICGILVVALPITIIFNKFSKYY). Over 414-491 (QKQKDMEVDQ…TASLENCTGK (78 aa)) the chain is Cytoplasmic.

It belongs to the potassium channel family. S (TC 1.A.1.2) subfamily. Kv9.3/KCNS3 sub-subfamily. Heterotetramer with KCNB1. Does not form homomultimers.

It localises to the cell membrane. Functionally, potassium channel regulatory subunit that modulates the delayed rectifier potassium channel activity of KCNB1 by namely slowing down the deactivation and inactivation time constants. While it does not form functional channel on its own, it can form functional heterotetrameric channels with KCNB1. This is Delayed-rectifier potassium channel regulatory subunit KCNS3 from Mus musculus (Mouse).